The following is a 451-amino-acid chain: UDP-N-acetyl-alpha-D-muramoyl-L-alanyl-L-glutamate epimerase (451 aa).

It belongs to the MurL family.

It catalyses the reaction UDP-N-acetyl-alpha-D-muramoyl-L-alanyl-L-glutamate + ATP + H2O = UDP-N-acetyl-alpha-D-muramoyl-L-alanyl-D-glutamate + AMP + diphosphate + H(+). Its pathway is cell wall biogenesis; peptidoglycan biosynthesis. In terms of biological role, cell wall formation. Catalyzes epimerization of the terminal L-glutamate in UDP-N-acetyl-alpha-D-muramoyl-L-alanyl-L-glutamate. This is UDP-N-acetyl-alpha-D-muramoyl-L-alanyl-L-glutamate epimerase from Xanthomonas oryzae pv. oryzae (strain MAFF 311018).